The primary structure comprises 310 residues: 4-hydroxy-3-methylbut-2-enyl diphosphate reductase (310 aa).

Position 13 (cysteine 13) interacts with [4Fe-4S] cluster. Residues histidine 42 and histidine 75 each coordinate (2E)-4-hydroxy-3-methylbut-2-enyl diphosphate. The dimethylallyl diphosphate site is built by histidine 42 and histidine 75. Residues histidine 42 and histidine 75 each contribute to the isopentenyl diphosphate site. A [4Fe-4S] cluster-binding site is contributed by cysteine 97. Histidine 125 contributes to the (2E)-4-hydroxy-3-methylbut-2-enyl diphosphate binding site. Residue histidine 125 coordinates dimethylallyl diphosphate. Histidine 125 contributes to the isopentenyl diphosphate binding site. The Proton donor role is filled by glutamate 127. Threonine 165 is a (2E)-4-hydroxy-3-methylbut-2-enyl diphosphate binding site. Cysteine 195 lines the [4Fe-4S] cluster pocket. (2E)-4-hydroxy-3-methylbut-2-enyl diphosphate-binding residues include serine 223, serine 224, asparagine 225, and serine 267. Serine 223, serine 224, asparagine 225, and serine 267 together coordinate dimethylallyl diphosphate. Positions 223, 224, 225, and 267 each coordinate isopentenyl diphosphate.

The protein belongs to the IspH family. Requires [4Fe-4S] cluster as cofactor.

The enzyme catalyses isopentenyl diphosphate + 2 oxidized [2Fe-2S]-[ferredoxin] + H2O = (2E)-4-hydroxy-3-methylbut-2-enyl diphosphate + 2 reduced [2Fe-2S]-[ferredoxin] + 2 H(+). It carries out the reaction dimethylallyl diphosphate + 2 oxidized [2Fe-2S]-[ferredoxin] + H2O = (2E)-4-hydroxy-3-methylbut-2-enyl diphosphate + 2 reduced [2Fe-2S]-[ferredoxin] + 2 H(+). The protein operates within isoprenoid biosynthesis; dimethylallyl diphosphate biosynthesis; dimethylallyl diphosphate from (2E)-4-hydroxy-3-methylbutenyl diphosphate: step 1/1. Its pathway is isoprenoid biosynthesis; isopentenyl diphosphate biosynthesis via DXP pathway; isopentenyl diphosphate from 1-deoxy-D-xylulose 5-phosphate: step 6/6. In terms of biological role, catalyzes the conversion of 1-hydroxy-2-methyl-2-(E)-butenyl 4-diphosphate (HMBPP) into a mixture of isopentenyl diphosphate (IPP) and dimethylallyl diphosphate (DMAPP). Acts in the terminal step of the DOXP/MEP pathway for isoprenoid precursor biosynthesis. The polypeptide is 4-hydroxy-3-methylbut-2-enyl diphosphate reductase (Chlamydia pneumoniae (Chlamydophila pneumoniae)).